The sequence spans 2298 residues: Non-reducing polyketide synthase pgmA (2298 aa).

Positions Leu-8–Leu-333 are N-terminal acylcarrier protein transacylase domain (SAT). The segment at Tyr-336–Gln-361 is disordered. Positions Lys-340–Ser-349 are enriched in polar residues. In terms of domain architecture, Ketosynthase family 3 (KS3) spans Arg-360 to Asp-798. Residues Cys-532, His-667, and His-714 each act as for beta-ketoacyl synthase activity in the active site. The acyl/malonyl transferases stretch occupies residues Val-901 to Gln-1193. Ser-994 (for acyl/malonyl transferase activity) is an active-site residue. An N-terminal hotdog fold region spans residues His-1283–Leu-1415. Residues His-1283–Lys-1589 form the PKS/mFAS DH domain. Residues Lys-1294–Arg-1586 form a product template (PT) domainn region. His-1315 functions as the Proton acceptor; for dehydratase activity in the catalytic mechanism. Residues Val-1438 to Lys-1589 are C-terminal hotdog fold. Asp-1502 acts as the Proton donor; for dehydratase activity in catalysis. Positions Tyr-1619–Ser-1642 are disordered. The region spanning Pro-1641–Glu-1716 is the Carrier 1 domain. Ser-1675 carries the post-translational modification O-(pantetheine 4'-phosphoryl)serine. Positions Glu-1716 to Asp-1762 are disordered. Polar residues predominate over residues Gly-1751–Leu-1760. The Carrier 2 domain maps to Lys-1765–Asp-1840. Ser-1799 bears the O-(pantetheine 4'-phosphoryl)serine mark. The interval Val-1927–Gly-2178 is reductase (R) domain.

It participates in pigment biosynthesis. It functions in the pathway secondary metabolite biosynthesis. In terms of biological role, non-reducing polyketide synthase; part of the gene cluster that mediates the biosynthesis of pleosporalin A, ascomycone A, as well as a third cryptic naphthoquinone derived pigment, all responsible for the coloration of conidia. The non-reducing polyketide synthase pgmA is responsible for the condensation of seven acetyl-CoA units to produce the cyclized heptaketide 3-acetonyl-1,6,8-trihydroxy-2-naphthaldehyde. The pathway begins with the biosynthesis of the cyclized heptaketide 3-acetonyl-1,6,8-trihydroxy-2-naphthaldehyde by the NR-PKS pgmA. The C-6 hydroxyl group is further methylated by the O-methyltransferase pgmB to yield fusarubinaldehyde which is in turn oxidized by the cytochrome P450 monooxygenase pgmC at C-9. The C-1 hydroxyl group is then methylated spontaneously. Although pgmE, pgmD and pgmH are essential for the production of pleosporalin A, it is not the case for the 2 other final products and it remains difficult to assign a specific function to each enzyme. PgmF and pgmG seem not to be involved in pigment biosynthesis although they were regulated by the cluster-specific transcription factor pgmR. The polypeptide is Non-reducing polyketide synthase pgmA (Aspergillus terreus (strain NIH 2624 / FGSC A1156)).